The following is a 141-amino-acid chain: Drosulfakinins (141 aa).

An N-terminal signal peptide occupies residues 1 to 31 (MGLRRCTHFATLVMPLWALALFFLVVMQVPA). Positions 32–73 (QTTSLQISKEDRRLQELESKMGAESEQPNANLVGPSISRFGD) are excised as a propeptide. The disordered stretch occupies residues 49–69 (ESKMGAESEQPNANLVGPSIS). Position 82 is a phenylalanine amide (phenylalanine 82). A propeptide spanning residues 86-111 (VPLISRPMIPIELDLLMDNDDERTKA) is cleaved from the precursor. At tyrosine 117 the chain carries Sulfotyrosine. Phenylalanine 122 carries the phenylalanine amide modification. Tyrosine 134 is modified (sulfotyrosine). Phenylalanine 139 bears the Phenylalanine amide mark.

The protein belongs to the gastrin/cholecystokinin family.

Its subcellular location is the secreted. Drosulfakinin-0 (DSK 0) plays diverse biological roles including regulating gut muscle contraction in adults but not in larvae. The protein is Drosulfakinins of Drosophila erecta (Fruit fly).